Here is an 89-residue protein sequence, read N- to C-terminus: Small ribosomal subunit protein uS15 (89 aa).

This sequence belongs to the universal ribosomal protein uS15 family. As to quaternary structure, part of the 30S ribosomal subunit. Forms a bridge to the 50S subunit in the 70S ribosome, contacting the 23S rRNA.

Its function is as follows. One of the primary rRNA binding proteins, it binds directly to 16S rRNA where it helps nucleate assembly of the platform of the 30S subunit by binding and bridging several RNA helices of the 16S rRNA. Forms an intersubunit bridge (bridge B4) with the 23S rRNA of the 50S subunit in the ribosome. This Dechloromonas aromatica (strain RCB) protein is Small ribosomal subunit protein uS15.